Consider the following 268-residue polypeptide: Putative S-adenosyl-L-methionine-dependent methyltransferase MAP_0663 (268 aa).

S-adenosyl-L-methionine-binding positions include Asp-124 and 153–154 (DL).

The protein belongs to the UPF0677 family.

Its function is as follows. Exhibits S-adenosyl-L-methionine-dependent methyltransferase activity. The chain is Putative S-adenosyl-L-methionine-dependent methyltransferase MAP_0663 from Mycolicibacterium paratuberculosis (strain ATCC BAA-968 / K-10) (Mycobacterium paratuberculosis).